The sequence spans 745 residues: Ribosomal protein S6 kinase alpha-6 (745 aa).

The tract at residues 1-28 is disordered; sequence MLPFAPQDEPWDREMEVFSGGGASSGEV. Residues 73 to 330 enclose the Protein kinase 1 domain; it reads FELLKVLGQG…VEEIKRHLFF (258 aa). Residues 79–87 and Lys-105 contribute to the ATP site; that span reads LGQGSFGKV. Asp-198 acts as the Proton acceptor in catalysis. Residues Ser-232, Ser-372, and Ser-389 each carry the phosphoserine modification. Residues 331-400 form the AGC-kinase C-terminal domain; it reads ANIDWDKLYK…VATSIAEEYK (70 aa). In terms of domain architecture, Protein kinase 2 spans 426 to 683; sequence YELKEDIGVG…AEQILKHSWI (258 aa). Residues 432–440 and Lys-455 contribute to the ATP site; that span reads IGVGSYSVC. Residue Asp-543 is the Proton acceptor of the active site. Thr-581 bears the Phosphothreonine mark.

Belongs to the protein kinase superfamily. AGC Ser/Thr protein kinase family. S6 kinase subfamily. Forms a complex with MAPK3/ERK1 but not with MAPK9 or MAPK14 in serum-starved cells. The cofactor is Mg(2+). Phosphorylated at Ser-232, Ser-372, and Ser-389 in serum-starved cells.

Its subcellular location is the cytoplasm. It localises to the cytosol. The protein resides in the nucleus. It catalyses the reaction L-seryl-[protein] + ATP = O-phospho-L-seryl-[protein] + ADP + H(+). It carries out the reaction L-threonyl-[protein] + ATP = O-phospho-L-threonyl-[protein] + ADP + H(+). Its activity is regulated as follows. Constitutively activated by phosphorylation at Ser-232, Ser-372, and Ser-389 in serum-starved cells. Does not require growth factor stimulation for significant kinase activity. Its function is as follows. Constitutively active serine/threonine-protein kinase that exhibits growth-factor-independent kinase activity and that may participate in p53/TP53-dependent cell growth arrest signaling and play an inhibitory role during embryogenesis. The protein is Ribosomal protein S6 kinase alpha-6 (RPS6KA6) of Homo sapiens (Human).